Here is an 858-residue protein sequence, read N- to C-terminus: MQRRGALFSVPGGGGKMAAGDLGELLVPHMPTIRVPRSGDRVYKNECAFSYDSPNSEGGLYVCMNTFLAFGREHVERHFRKTGQSVYMHLKRHMREKVRGASGGALPKRRNSKIFLDLDMDDDLNSDDYEYEDEAKLVIFPDHYEIALPNIEELPALVTIACDAVLSSKSPYRKQDPDTWENEVPVSKYANNLVQLDNGVRIPPSGWKCARCDLRENLWLNLTDGSVLCGKWFFDSSGGNGHALEHYRDMGYPLAVKLGTITPDGADVYSFQEEGPVSDPHLAKHLAHFGIDMLHTQGTENGLRDNDIKPRVSEWEVIQESGTKLKPMYGPGYTGLKNLGNSCYLSSVMQAIFSIPEFQRAYVGNLPRIFDYSPLDPTQDFNTQMTKLGHGLLSGQYSKPPVKSELIEQVMKEEHKPQQNGISPRMFKAFVSKSHPEFSSNRQQDAQEFFLHLVNLVERNRIGSENPSDVFRFLVEERIQCCQTRKVRYTERVDYLMQLPVAMEAATNKDELITYELMRREAEANRRPLPELVRAKIPFSACLQAFAEPDNVDDFWSSALQAKSAGVKTSRFASFPEYLVVQIKKFTFGLDWVPRKFDVSIDMPDLLDISHLRARGLQPGEEELPDISPPIVIPDDSKDRLMNQLIDPSDIDESSVMQLAEMGFPLEACRKAVYFTGNTGAEVAFNWIIVHMEEPDFAEPLAIPGYGGAGASVFGATGLDNQPPEEIVAIITSMGFQRNQAVQALQATNHNLERALDWIFSHPEFEEDSDFVIEMENNANANIVSEAKPEGPRVKDGSGMYELFAFISHMGTSTMSGHYVCHIKKEGRWVIYNDHKVCASERPPKDLGYMYFYRRIPS.

Serine 112 is modified (phosphoserine). The UBP-type; degenerate zinc-finger motif lies at 185-293 (PVSKYANNLV…KHLAHFGIDM (109 aa)). Zn(2+) is bound by residues cysteine 209, cysteine 212, cysteine 229, and histidine 242. Residue lysine 309 forms a Glycyl lysine isopeptide (Lys-Gly) (interchain with G-Cter in SUMO2) linkage. The USP domain maps to 334–856 (TGLKNLGNSC…LGYMYFYRRI (523 aa)). Cysteine 343 acts as the Nucleophile in catalysis. Lysine 403 is covalently cross-linked (Glycyl lysine isopeptide (Lys-Gly) (interchain with G-Cter in SUMO2)). UBA domains follow at residues 650–691 (DIDE…IIVH) and 722–762 (QPPE…IFSH). The Proton acceptor role is filled by histidine 818.

Belongs to the peptidase C19 family. In terms of assembly, interacts with UFD1. Interacts (via UBA domains) with SIAH2 (when ubiquitinated). Interacts with BAG6; the interaction is direct and may mediate UBL4A deubiquitination. Interacts (via UBA 2 domain) with AMFR; the interaction is direct. Interacts with UBL4A; may be indirect via BAG6. Interacts with NEDD4.

The protein localises to the cytoplasm. The enzyme catalyses Thiol-dependent hydrolysis of ester, thioester, amide, peptide and isopeptide bonds formed by the C-terminal Gly of ubiquitin (a 76-residue protein attached to proteins as an intracellular targeting signal).. With respect to regulation, specifically inhibited by spautin-1 (specific and potent autophagy inhibitor-1), a derivative of MBCQ that binds to USP13 and inhibits deubiquitinase activity. Regulated by PIK3C3/VPS34-containing complexes. The weak deubiquitinase activity in vitro suggests the existence of some mechanism that activates the enzyme. Deubiquitinase that mediates deubiquitination of target proteins such as BECN1, MITF, SKP2 and USP10 and is involved in various processes such as autophagy, endoplasmic reticulum-associated degradation (ERAD), cell cycle progression or DNA damage response. Component of a regulatory loop that controls autophagy and p53/TP53 levels: mediates deubiquitination of BECN1, a key regulator of autophagy, leading to stabilize the PIK3C3/VPS34-containing complexes. Alternatively, forms with NEDD4 a deubiquitination complex, which subsequently stabilizes VPS34 to promote autophagy. Also deubiquitinates USP10, an essential regulator of p53/TP53 stability. In turn, PIK3C3/VPS34-containing complexes regulate USP13 stability, suggesting the existence of a regulatory system by which PIK3C3/VPS34-containing complexes regulate p53/TP53 protein levels via USP10 and USP13. Recruited by nuclear UFD1 and mediates deubiquitination of SKP2, thereby regulating endoplasmic reticulum-associated degradation (ERAD). Also regulates ERAD through the deubiquitination of UBL4A a component of the BAG6/BAT3 complex. Mediates stabilization of SIAH2 independently of deubiquitinase activity: binds ubiquitinated SIAH2 and acts by impairing SIAH2 autoubiquitination. Regulates the cell cycle progression by stabilizing cell cycle proteins such as SKP2 and AURKB. In addition, plays an important role in maintaining genomic stability and in DNA replication checkpoint activation via regulation of RAP80 and TOPBP1. Deubiquitinates the multifunctional protein HMGB1 and subsequently drives its nucleocytoplasmic localization and its secretion. Positively regulates type I and type II interferon signalings by deubiquitinating STAT1 but negatively regulates antiviral response by deubiquitinating STING1. This chain is Ubiquitin carboxyl-terminal hydrolase 13 (Usp13), found in Mus musculus (Mouse).